The primary structure comprises 258 residues: 5'-nucleotidase SurE (258 aa).

Asp14, Asp15, Ser45, and Asn101 together coordinate a divalent metal cation.

Belongs to the SurE nucleotidase family. A divalent metal cation serves as cofactor.

It localises to the cytoplasm. The catalysed reaction is a ribonucleoside 5'-phosphate + H2O = a ribonucleoside + phosphate. In terms of biological role, nucleotidase that shows phosphatase activity on nucleoside 5'-monophosphates. This is 5'-nucleotidase SurE from Chlorobium phaeobacteroides (strain DSM 266 / SMG 266 / 2430).